We begin with the raw amino-acid sequence, 283 residues long: Formamidopyrimidine-DNA glycosylase (283 aa).

The Schiff-base intermediate with DNA role is filled by P2. The Proton donor role is filled by E3. The active-site Proton donor; for beta-elimination activity is the K58. DNA is bound by residues H100, R119, and R162. An FPG-type zinc finger spans residues 247–283 (DVYGREGEPCRRAGCTGTVTRITQSGRSSFYCGKCQR). The active-site Proton donor; for delta-elimination activity is R273.

This sequence belongs to the FPG family. Monomer. Zn(2+) is required as a cofactor.

It carries out the reaction Hydrolysis of DNA containing ring-opened 7-methylguanine residues, releasing 2,6-diamino-4-hydroxy-5-(N-methyl)formamidopyrimidine.. The enzyme catalyses 2'-deoxyribonucleotide-(2'-deoxyribose 5'-phosphate)-2'-deoxyribonucleotide-DNA = a 3'-end 2'-deoxyribonucleotide-(2,3-dehydro-2,3-deoxyribose 5'-phosphate)-DNA + a 5'-end 5'-phospho-2'-deoxyribonucleoside-DNA + H(+). Functionally, involved in base excision repair of DNA damaged by oxidation or by mutagenic agents. Acts as a DNA glycosylase that recognizes and removes damaged bases. Has a preference for oxidized purines, such as 7,8-dihydro-8-oxoguanine (8-oxoG). Has AP (apurinic/apyrimidinic) lyase activity and introduces nicks in the DNA strand. Cleaves the DNA backbone by beta-delta elimination to generate a single-strand break at the site of the removed base with both 3'- and 5'-phosphates. This Ruegeria sp. (strain TM1040) (Silicibacter sp.) protein is Formamidopyrimidine-DNA glycosylase.